The sequence spans 266 residues: Tryptophan synthase alpha chain (266 aa).

Active-site proton acceptor residues include E47 and D58.

It belongs to the TrpA family. As to quaternary structure, tetramer of two alpha and two beta chains.

It catalyses the reaction (1S,2R)-1-C-(indol-3-yl)glycerol 3-phosphate + L-serine = D-glyceraldehyde 3-phosphate + L-tryptophan + H2O. It functions in the pathway amino-acid biosynthesis; L-tryptophan biosynthesis; L-tryptophan from chorismate: step 5/5. The alpha subunit is responsible for the aldol cleavage of indoleglycerol phosphate to indole and glyceraldehyde 3-phosphate. This Leptospira biflexa serovar Patoc (strain Patoc 1 / Ames) protein is Tryptophan synthase alpha chain.